The primary structure comprises 184 residues: ATP synthase subunit b, chloroplastic (184 aa).

The helical transmembrane segment at 29–49 threads the bilayer; that stretch reads INLINLILVLGILFYYGKGVL.

It belongs to the ATPase B chain family. As to quaternary structure, F-type ATPases have 2 components, F(1) - the catalytic core - and F(0) - the membrane proton channel. F(1) has five subunits: alpha(3), beta(3), gamma(1), delta(1), epsilon(1). F(0) has four main subunits: a(1), b(1), b'(1) and c(10-14). The alpha and beta chains form an alternating ring which encloses part of the gamma chain. F(1) is attached to F(0) by a central stalk formed by the gamma and epsilon chains, while a peripheral stalk is formed by the delta, b and b' chains.

The protein localises to the plastid. It is found in the chloroplast thylakoid membrane. Its function is as follows. F(1)F(0) ATP synthase produces ATP from ADP in the presence of a proton or sodium gradient. F-type ATPases consist of two structural domains, F(1) containing the extramembraneous catalytic core and F(0) containing the membrane proton channel, linked together by a central stalk and a peripheral stalk. During catalysis, ATP synthesis in the catalytic domain of F(1) is coupled via a rotary mechanism of the central stalk subunits to proton translocation. In terms of biological role, component of the F(0) channel, it forms part of the peripheral stalk, linking F(1) to F(0). The chain is ATP synthase subunit b, chloroplastic from Adiantum capillus-veneris (Maidenhair fern).